A 471-amino-acid chain; its full sequence is Collagen alpha-3(IV) chain (471 aa).

A triple-helical region region spans residues 1–238 (GLPGRKGPVG…KGKPGDTGPP (238 aa)). The interval 1–241 (GLPGRKGPVG…PGDTGPPAAG (241 aa)) is disordered. Over residues 52-61 (MPGPPGPPGS) the composition is skewed to pro residues. The Cell attachment site signature appears at 106–108 (RGD). Residues 127–141 (PGPPGPPGQSGPKGP) are compositionally biased toward pro residues. Low complexity predominate over residues 165 to 174 (SAGEPGMQGE). Residues 175 to 187 (PGPPGPPGDPGPC) show a composition bias toward pro residues. Residues proline 232 and proline 238 each carry the hydroxyproline modification. In terms of domain architecture, Collagen IV NC1 spans 246-470 (GFVFTRHSQT…SRCQVCMKMR (225 aa)). Cystine bridges form between cysteine 261/cysteine 352, cysteine 294/cysteine 349, cysteine 306/cysteine 312, cysteine 371/cysteine 466, cysteine 405/cysteine 463, and cysteine 417/cysteine 423. Residue methionine 334 forms an S-Lysyl-methionine sulfilimine (Met-Lys) (interchain with K-452) linkage. An S-Lysyl-methionine sulfilimine (Lys-Met) (interchain with M-334) cross-link involves residue lysine 452.

Belongs to the type IV collagen family. There are six type IV collagen isoforms, alpha 1(IV)-alpha 6(IV), each of which can form a triple helix structure with 2 other chains to generate type IV collagen network. The alpha 3(IV) chain forms a triple helical protomer with alpha 4(IV) and alpha 5(IV); this triple helical structure dimerizes through NC1-NC1 domain interactions such that the alpha 3(IV), alpha 4(IV) and alpha 5(IV) chains of one protomer connect with the alpha 5(IV), alpha 4(IV) and alpha 3(IV) chains of the opposite promoter, respectively. Interacts with ITGB3. Associates with LAMB2 at the neuromuscular junction and in GBM. Prolines at the third position of the tripeptide repeating unit (G-X-Y) are hydroxylated in some or all of the chains. In terms of processing, type IV collagens contain numerous cysteine residues which are involved in inter- and intramolecular disulfide bonding. 12 of these, located in the NC1 domain, are conserved in all known type IV collagens. Post-translationally, the trimeric structure of the NC1 domains is stabilized by covalent bonds between Lys and Met residues. Phosphorylated. Thought to be phosphorylated by CERT, but CERT does not have kinase activity.

It localises to the secreted. The protein localises to the extracellular space. Its subcellular location is the extracellular matrix. It is found in the basement membrane. Type IV collagen is the major structural component of glomerular basement membranes (GBM), forming a 'chicken-wire' meshwork together with laminins, proteoglycans and entactin/nidogen. This Bos taurus (Bovine) protein is Collagen alpha-3(IV) chain (COL4A3).